We begin with the raw amino-acid sequence, 429 residues long: Enolase (429 aa).

Position 163 (glutamine 163) interacts with (2R)-2-phosphoglycerate. The active-site Proton donor is glutamate 205. Mg(2+) is bound by residues aspartate 242, glutamate 285, and aspartate 312. Residues lysine 337, arginine 366, serine 367, and lysine 388 each contribute to the (2R)-2-phosphoglycerate site. Catalysis depends on lysine 337, which acts as the Proton acceptor.

Belongs to the enolase family. As to quaternary structure, component of the RNA degradosome, a multiprotein complex involved in RNA processing and mRNA degradation. Mg(2+) serves as cofactor.

Its subcellular location is the cytoplasm. The protein localises to the secreted. It localises to the cell surface. It carries out the reaction (2R)-2-phosphoglycerate = phosphoenolpyruvate + H2O. It functions in the pathway carbohydrate degradation; glycolysis; pyruvate from D-glyceraldehyde 3-phosphate: step 4/5. In terms of biological role, catalyzes the reversible conversion of 2-phosphoglycerate (2-PG) into phosphoenolpyruvate (PEP). It is essential for the degradation of carbohydrates via glycolysis. This Alkalilimnicola ehrlichii (strain ATCC BAA-1101 / DSM 17681 / MLHE-1) protein is Enolase.